The following is a 2713-amino-acid chain: MAAAAGGGSCPGPGSARGRFPGRPRGSGGGGGRGGRGNGAERVRVALRRGGGAAGPGGAEPGEDTALLRLLGLRRGLRRLRRLWAGARVQRGRGRGRGRGWGPNRGCMPEEESSDGESEEEEFQGFHSDEDVAPSSLRSALRSQRGRAPRGRGRKHKTTPLPPRLADVTPVPPKAPTRKRGEEGTERMVQALTELLRRSQAPQPPRSRARAREPSTPRRSRGRPPGRPAGPCRKKQQAVVLAEAAVTIPKPEPPPPVVPVKNKAGSWKCKEGPGPGPGTPKRGGQPGRGGRGGRGRGRGGLPLMIKFVSKAKKVKMGQLSQELESGQGHGQRGESWQDAPQRKDGDEPERGSCRKKQEQKLEEEEEEEEKEGEEKEEKDDNEDNNKQEEEEETERAVAEEEAMLAKEKEEAKLPSPPLTPPVPSPPPPLPPPSTSPPPPASPLPPPVSPPPPLSPPPYPAPEKQEESPPLVPATCSRKRGRPPLTPSQRAEREAARSGPEGTLSPTPNPSTTTGSPLEDSPTVVPKSTTFLKNIRQFIMPVVSARSSRVIKTPRRFMDEDPPKPPKVEASIVRPPVATSPPAPQEPVPVSSPPRVPTPPSTPVPLPEKRRSILREPTFRWTSLTRELPPPPPAPPPAPSPPPAPATPSRRPLLLRAPQFTPSEAHLKIYESVLTPPPLGALETPEPELPPADDSPAEPEPRAVGRTNHLSLPRFVPVVTSPVKVEVPPHGAPALSEGQQLQLQQPPQALQTQLLPQALPPQQPQAQPPPSPQHTPPLEKARVASLGSLPLSGVEEKMFSLLKRAKVQLFKIDQQQQQKVAASMPLSPAVQTEEAVGTVKQTPDRGCVRSEDESMEAKRDRASGPESPLQGPRIKHVCRHAAVALGQARAMVPEDVPRLSALPLRDRQDLATEDTSSASETESVPSRSQREKVESAGPGGDSEPTGSTGALAHTPRRSLPSHHGKKMRMARCGHCRGCLRVQDCGSCVNCLDKPKFGGPNTKKQCCVYRKCDKIEARKMERLAKKGRTIVKTLLPWDSDESPEASPGPPGPRRGAGAGGSREEVGATPGPEEQDSLLLQRKSARRCVKQRPSYDVFEDSDDSEPGGPPAPRRRTPREHELPVLEPEEQSRPRKPTLQPVLQLKARRRLDKDALAPGPFASFPNGWTGKQKSPDGVHRVRVDFKEDCDLENVWLMGGLSVLTSVPGGPPMVCLLCASKGLHELVFCQVCCDPFHPFCLEEAERPSPQHRDTWCCRRCKFCHVCGRKGRGSKHLLECERCRHAYHPACLGPSYPTRATRRRRHWICSACVRCKSCGATPGKNWDVEWSGDYSLCPRCTELYEKGNYCPICTRCYEDNDYESKMMQCAQCDHWVHAKCEGLSDEDYEILSGLPDSVLYTCGPCAGATQPRWREALSGALQGGLRQVLQGLLSSKVAGPLLLCTQCGQDGKQLHPGPCDLQAVGKRFEEGLYKSVHSFMEDVVAILMRHSEEGETPERRAGSQMKGLLLKLLESAFCWFDAHDPKYWRRSTRLPNGVLPNAVLPPSLDHVYAQWRQQESETPESGQPPGDPSAAFQSKDPAAFSHLDDPRQCALCLKYGDADSKEAGRLLYIGQNEWTHVNCAIWSAEVFEENDGSLKNVHAAVARGRQMRCELCLKPGATVGCCLSSCLSNFHFMCARASYCIFQDDKKVFCQKHTDLLDGKEIVTPDGFDVLRRVYVDFEGINFKRKFLTGLEPDVINVLIGSIRINSLGTLSDLSDCEGRLFPIGYQCSRLYWSTVDARRRCWYRCRILEYRPWGPREEPVHLEAAEENQTIVHSPTPSSDTDSLIPGDPVHHSPIQNLDPPLRTDSSNGPPPTPRSFSGARIKVPNYSPSRRPLGGVSFGPLPSPGSPSSLTHHIPTVGDSDFPAPPRRSRRPSPLATRPPPSRRTSSPLRTSPQLRVPLSTSVTALTPTSGELAPPDLAPSPLPPSEDLGPDFEDMEVVSGLSAADLDFAASLLGTEPFQEEIVAAGAVGSSQGGPGDSSEEEASPTTHYVHFPVTVVSGPALAPSSLAGAPRIEQLDGVDDGTDSEAEAVQQPRGQGTPPSGPGVGRGGVLGAAGDRAQPPEDLPSEIVDFVLKNLGGPGEGAAGPREDSLPSAPPLANGSQPPQSLSTSPADPTRTFAWLPGAPGVRVLSLGPAPEPPKPATSKIILVNKLGQVFVKMAGEGEPVAPPVKQPPLPPIIPPTAPTSWTLPPGPLLSVLPVVGVGVVRPAPPPPPPPLTLVFSSGPPSPPRQAIRVKRVSTFSGRSPPVPPPNKTPRLDEDGESLEDAHHVPGISGSGFSRVRMKTPTVRGVLDLNNPGEQPEEESPGRPQDRCPLLPLAEAPSQALDGSSDLLFESQWHHYSAGEASSSEEEPPSPEDKENQVPKRVGPHLRFEISSDDGFSVEAESLEVAWRTLIEKVQEARGHARLRHLSFSGMSGARLLGIHHDAVIFLAEQLPGAQRCQHYKFRYHQQGEGQEEPPLNPHGAARAEVYLRKCTFDMFNFLASQHRVLPEGATCDEEEDEVQLRSTRRATSLELPMAMRFRHLKKTSKEAVGVYRSAIHGRGLFCKRNIDAGEMVIEYSGIVIRSVLTDKREKFYDGKGIGCYMFRMDDFDVVDATMHGNAARFINHSCEPNCFSRVIHVEGQKHIVIFALRRILRGEELTYDYKFPIEDASNKLPCNCGAKRCRRFLN.

Positions 1-11 are enriched in gly residues; that stretch reads MAAAAGGGSCP. Disordered stretches follow at residues 1-65, 82-524, and 542-783; these read MAAA…GEDT, RLWA…PTVV, and VSAR…ARVA. A2 carries the N-acetylalanine modification. Low complexity predominate over residues 12–24; the sequence is GPGSARGRFPGRP. Positions 17–36 match the Menin-binding motif (MBM) motif; it reads RGRFPGRPRGSGGGGGRGGR. Gly residues-rich tracts occupy residues 25 to 38 and 49 to 60; these read RGSGGGGGRGGRGN and RGGGAAGPGGAE. The a.T hook 1 DNA-binding region spans 37 to 44; the sequence is GNGAERVR. The segment covering 109–123 has biased composition (acidic residues); the sequence is PEEESSDGESEEEEF. Positions 110 to 117 form a DNA-binding region, a.T hook 2; the sequence is EEESSDGE. 3 positions are modified to phosphoserine: S113, S114, and S118. Positions 144–158 are enriched in basic residues; sequence QRGRAPRGRGRKHKT. The span at 340-360 shows a compositional bias: basic and acidic residues; sequence PQRKDGDEPERGSCRKKQEQK. Residues 357–365 constitute a DNA-binding region (a.T hook 3); that stretch reads QEQKLEEEE. The span at 361–393 shows a compositional bias: acidic residues; the sequence is LEEEEEEEEKEGEEKEEKDDNEDNNKQEEEEET. The span at 394–412 shows a compositional bias: basic and acidic residues; sequence ERAVAEEEAMLAKEKEEAK. The span at 414–460 shows a compositional bias: pro residues; sequence PSPPLTPPVPSPPPPLPPPSTSPPPPASPLPPPVSPPPPLSPPPYPA. The span at 501–517 shows a compositional bias: low complexity; sequence GTLSPTPNPSTTTGSPL. Positions 555 to 566 are enriched in basic and acidic residues; it reads RFMDEDPPKPPK. A compositionally biased stretch (pro residues) spans 577-605; sequence ATSPPAPQEPVPVSSPPRVPTPPSTPVPL. A compositionally biased stretch (basic and acidic residues) spans 606–617; the sequence is PEKRRSILREPT. Residues 627–645 show a composition bias toward pro residues; sequence LPPPPPAPPPAPSPPPAPA. Low complexity-rich tracts occupy residues 646–657, 715–728, and 738–756; these read TPSRRPLLLRAP, VPVVTSPVKVEVPP, and QQLQLQQPPQALQTQLLPQ. Pro residues predominate over residues 757 to 774; that stretch reads ALPPQQPQAQPPPSPQHT. Residue K810 forms a Glycyl lysine isopeptide (Lys-Gly) (interchain with G-Cter in SUMO2) linkage. Phosphoserine occurs at positions 826, 849, and 866. 2 disordered regions span residues 831–872 and 899–964; these read TEEA…QGPR and SALP…HHGK. A compositionally biased stretch (basic and acidic residues) spans 841–862; it reads TPDRGCVRSEDESMEAKRDRAS. Positions 912–922 are enriched in low complexity; sequence EDTSSASETES. S941 carries the phosphoserine modification. The span at 953-964 shows a compositional bias: basic residues; the sequence is TPRRSLPSHHGK. Residues 964-1011 form a CXXC-type zinc finger; sequence KKMRMARCGHCRGCLRVQDCGSCVNCLDKPKFGGPNTKKQCCVYRKCD. C971, C974, C977, C983, C986, C989, C1005, and C1010 together coordinate Zn(2+). Disordered stretches follow at residues 1032–1076 and 1088–1138; these read LLPW…DSLL and QRPS…LQPV. Residues S1037, S1040, S1098, and S1101 each carry the phosphoserine modification. A Glycyl lysine isopeptide (Lys-Gly) (interchain with G-Cter in SUMO2) cross-link involves residue K1142. 3 consecutive PHD-type zinc fingers follow at residues 1207–1258, 1255–1309, and 1341–1402; these read PMVC…CKFC, CKFC…CVRC, and GNYC…CAGA. Positions 1410–1510 constitute a Bromo domain; it reads ALSGALQGGL…GLLLKLLESA (101 aa). The disordered stretch occupies residues 1550–1572; sequence RQQESETPESGQPPGDPSAAFQS. Residues 1584–1624 form a C2HC pre-PHD-type zinc finger; that stretch reads PRQCALCLKYGDADSKEAGRLLYIGQNEWTHVNCAIWSAEV. A PHD-type 4 zinc finger spans residues 1645-1692; sequence MRCELCLKPGATVGCCLSSCLSNFHFMCARASYCIFQDDKKVFCQKHT. Positions 1733–1789 constitute an FYR N-terminal domain; that stretch reads VINVLIGSIRINSLGTLSDLSDCEGRLFPIGYQCSRLYWSTVDARRRCWYRCRILEY. Positions 1808-1821 are enriched in polar residues; it reads QTIVHSPTPSSDTD. 5 disordered regions span residues 1808-1973, 2056-2104, 2116-2160, 2279-2356, and 2382-2408; these read QTIV…GPDF, QLDG…PPED, NLGG…RTFA, VSTF…RCPL, and YSAGEASSSEEEPPSPEDKENQVPKRV. 2 stretches are compositionally biased toward low complexity: residues 1872-1890 and 1923-1933; these read PLGGVSFGPLPSPGSPSSL and RRTSSPLRTSP. Phosphoserine is present on residues S1926 and S1932. Over residues 1939-1950 the composition is skewed to polar residues; sequence LSTSVTALTPTS. Positions 2058 to 2068 are enriched in acidic residues; sequence DGVDDGTDSEA. A phosphothreonine mark is found at T2064 and T2079. Over residues 2084-2093 the composition is skewed to gly residues; it reads PGVGRGGVLG. Over residues 2140–2153 the composition is skewed to polar residues; that stretch reads NGSQPPQSLSTSPA. Residues S2286 and S2346 each carry the phosphoserine modification. In terms of domain architecture, FYR C-terminal spans 2409 to 2490; the sequence is GPHLRFEISS…QRCQHYKFRY (82 aa). The short motif at 2506–2511 is the WDR5 interaction motif (WIN) element; sequence GAARAE. Residues 2573 to 2689 form the SET domain; sequence EAVGVYRSAI…RGEELTYDYK (117 aa). S-adenosyl-L-methionine-binding positions include H2583, R2585, Y2627, and 2650 to 2651; that span reads NH. Residues C2653 and C2701 each coordinate Zn(2+). Positions 2697–2713 constitute a Post-SET domain; that stretch reads NKLPCNCGAKRCRRFLN. An S-adenosyl-L-methionine-binding site is contributed by N2702. Zn(2+) is bound by residues C2703 and C2708.

The protein belongs to the class V-like SAM-binding methyltransferase superfamily. Histone-lysine methyltransferase family. TRX/MLL subfamily. As to quaternary structure, component of the menin-associated histone methyltransferase complex, at least composed of KMT2B/MLL4, ASH2L, RBBP5, WDR5, DPY30, MEN1; the complex interacts with POLR2A and POLR2B via MEN1. Interacts with NFE2. Interacts with KDM6B. Interacts (via WIN motif) with WDR5. Interacts (via MBM motif) with MEN1.

It is found in the nucleus. The enzyme catalyses L-lysyl(4)-[histone H3] + S-adenosyl-L-methionine = N(6)-methyl-L-lysyl(4)-[histone H3] + S-adenosyl-L-homocysteine + H(+). The catalysed reaction is N(6)-methyl-L-lysyl(4)-[histone H3] + S-adenosyl-L-methionine = N(6),N(6)-dimethyl-L-lysyl(4)-[histone H3] + S-adenosyl-L-homocysteine + H(+). Its function is as follows. Histone methyltransferase that catalyzes methyl group transfer from S-adenosyl-L-methionine to the epsilon-amino group of 'Lys-4' of histone H3 (H3K4) via a non-processive mechanism. Part of chromatin remodeling machinery predominantly forms H3K4me1 and H3K4me2 methylation marks at active chromatin sites where transcription and DNA repair take place. Likely plays a redundant role with KMT2C in enriching H3K4me1 marks on primed and active enhancer elements. Plays a central role in beta-globin locus transcription regulation by being recruited by NFE2. Plays an important role in controlling bulk H3K4me during oocyte growth and preimplantation development. Required during the transcriptionally active period of oocyte growth for the establishment and/or maintenance of bulk H3K4 trimethylation (H3K4me3), global transcriptional silencing that preceeds resumption of meiosis, oocyte survival and normal zygotic genome activation. The polypeptide is Histone-lysine N-methyltransferase 2B (Kmt2b) (Mus musculus (Mouse)).